A 271-amino-acid polypeptide reads, in one-letter code: ATP synthase subunit delta (271 aa).

It belongs to the ATPase delta chain family. In terms of assembly, F-type ATPases have 2 components, F(1) - the catalytic core - and F(0) - the membrane proton channel. F(1) has five subunits: alpha(3), beta(3), gamma(1), delta(1), epsilon(1). F(0) has three main subunits: a(1), b(2) and c(10-14). The alpha and beta chains form an alternating ring which encloses part of the gamma chain. F(1) is attached to F(0) by a central stalk formed by the gamma and epsilon chains, while a peripheral stalk is formed by the delta and b chains.

It localises to the cell membrane. Functionally, f(1)F(0) ATP synthase produces ATP from ADP in the presence of a proton or sodium gradient. F-type ATPases consist of two structural domains, F(1) containing the extramembraneous catalytic core and F(0) containing the membrane proton channel, linked together by a central stalk and a peripheral stalk. During catalysis, ATP synthesis in the catalytic domain of F(1) is coupled via a rotary mechanism of the central stalk subunits to proton translocation. Its function is as follows. This protein is part of the stalk that links CF(0) to CF(1). It either transmits conformational changes from CF(0) to CF(1) or is implicated in proton conduction. In Corynebacterium aurimucosum (strain ATCC 700975 / DSM 44827 / CIP 107346 / CN-1) (Corynebacterium nigricans), this protein is ATP synthase subunit delta.